A 461-amino-acid polypeptide reads, in one-letter code: MECLMAVILAAGEGKRMKSKKAKVVHEIQGIPLVEWVYRSVKNAGIDEVVLVVGHKAEEVKEKMGDKVLYAFQEKQLGTGHALMQAQEYLKDKDGYVVVLYGDTPLITSKTISDTINYHREQANSATIITAVLNNPDGYGRIVRSGDGSVRKIVEHKDASLEERNIKEINSGIYCFNIRDLTEALKELDNNNSQGEYYLTDTIEILINKGKKVGAIKVEDSSEILGINDRVQLAEAGRIIRSRILKRHMKNGVTIIDPDSTYIDEDVEIGIDTVVYPSTIIEGKTKIGEDCIIGPGSRLVNAQISDRVEVKNSVVLESSIDNDTKVGPFAYVRPGSVIGKNVKIGDFVEIKKSVIGDKTKISHLTYVGDAEVGKNVNLGCGVVVVNYDGKKKNKTIIGDNAFVGCNVNLISPVEVKDNAYVAAGSTITEEVPEYSLAIARSRQTIKEDWVIKKGMLRQEKE.

Positions 1 to 230 are pyrophosphorylase; sequence MECLMAVILA…SSEILGINDR (230 aa). Residues 9–12, Lys23, Gln73, 78–79, 101–103, Gly140, Glu155, Asn170, and Asn228 contribute to the UDP-N-acetyl-alpha-D-glucosamine site; these read LAAG, GT, and YGD. Asp103 serves as a coordination point for Mg(2+). Asn228 is a Mg(2+) binding site. Residues 231-251 are linker; the sequence is VQLAEAGRIIRSRILKRHMKN. Residues 252–461 form an N-acetyltransferase region; sequence GVTIIDPDST…KKGMLRQEKE (210 aa). Arg333 and Lys351 together coordinate UDP-N-acetyl-alpha-D-glucosamine. Catalysis depends on His363, which acts as the Proton acceptor. Tyr366 and Asn377 together coordinate UDP-N-acetyl-alpha-D-glucosamine. Acetyl-CoA is bound by residues 386-387, Ala423, and Arg440; that span reads NY.

In the N-terminal section; belongs to the N-acetylglucosamine-1-phosphate uridyltransferase family. This sequence in the C-terminal section; belongs to the transferase hexapeptide repeat family. In terms of assembly, homotrimer. Mg(2+) serves as cofactor.

The protein localises to the cytoplasm. The catalysed reaction is alpha-D-glucosamine 1-phosphate + acetyl-CoA = N-acetyl-alpha-D-glucosamine 1-phosphate + CoA + H(+). The enzyme catalyses N-acetyl-alpha-D-glucosamine 1-phosphate + UTP + H(+) = UDP-N-acetyl-alpha-D-glucosamine + diphosphate. It functions in the pathway nucleotide-sugar biosynthesis; UDP-N-acetyl-alpha-D-glucosamine biosynthesis; N-acetyl-alpha-D-glucosamine 1-phosphate from alpha-D-glucosamine 6-phosphate (route II): step 2/2. It participates in nucleotide-sugar biosynthesis; UDP-N-acetyl-alpha-D-glucosamine biosynthesis; UDP-N-acetyl-alpha-D-glucosamine from N-acetyl-alpha-D-glucosamine 1-phosphate: step 1/1. The protein operates within bacterial outer membrane biogenesis; LPS lipid A biosynthesis. Its function is as follows. Catalyzes the last two sequential reactions in the de novo biosynthetic pathway for UDP-N-acetylglucosamine (UDP-GlcNAc). The C-terminal domain catalyzes the transfer of acetyl group from acetyl coenzyme A to glucosamine-1-phosphate (GlcN-1-P) to produce N-acetylglucosamine-1-phosphate (GlcNAc-1-P), which is converted into UDP-GlcNAc by the transfer of uridine 5-monophosphate (from uridine 5-triphosphate), a reaction catalyzed by the N-terminal domain. This chain is Bifunctional protein GlmU, found in Acetivibrio thermocellus (strain ATCC 27405 / DSM 1237 / JCM 9322 / NBRC 103400 / NCIMB 10682 / NRRL B-4536 / VPI 7372) (Clostridium thermocellum).